A 558-amino-acid chain; its full sequence is Armadillo repeat-containing X-linked protein 5 (558 aa).

Composition is skewed to basic and acidic residues over residues 1 to 14 (MVDSGTEARARGKA) and 139 to 156 (KSHDKANTGSRPDRREEA). 2 disordered regions span residues 1 to 34 (MVDSGTEARARGKAEAGLQDGISGPAAARVNGKT) and 139 to 163 (KSHDKANTGSRPDRREEASIGMKSS). 4 ARM repeats span residues 300 to 339 (CKSRGFSLEPKEFDKLVALLKLTKDPFIHEIATMIMGISP), 422 to 461 (VKFEDHYVITSYIPDFLTLLNKGSVKTKFYVLKVFSCLSK), 463 to 503 (HANT…NINF), and 520 to 558 (SELISIFQEAKQFGQKLQDLAEHSDPEVRDKVIRLILKL).

It belongs to the eutherian X-chromosome-specific Armcx family.

In Pongo abelii (Sumatran orangutan), this protein is Armadillo repeat-containing X-linked protein 5 (ARMCX5).